The sequence spans 213 residues: ATP-dependent Clp protease proteolytic subunit (213 aa).

Ser114 (nucleophile) is an active-site residue. His139 is a catalytic residue.

This sequence belongs to the peptidase S14 family. In terms of assembly, fourteen ClpP subunits assemble into 2 heptameric rings which stack back to back to give a disk-like structure with a central cavity, resembling the structure of eukaryotic proteasomes.

The protein localises to the cytoplasm. The catalysed reaction is Hydrolysis of proteins to small peptides in the presence of ATP and magnesium. alpha-casein is the usual test substrate. In the absence of ATP, only oligopeptides shorter than five residues are hydrolyzed (such as succinyl-Leu-Tyr-|-NHMec, and Leu-Tyr-Leu-|-Tyr-Trp, in which cleavage of the -Tyr-|-Leu- and -Tyr-|-Trp bonds also occurs).. Functionally, cleaves peptides in various proteins in a process that requires ATP hydrolysis. Has a chymotrypsin-like activity. Plays a major role in the degradation of misfolded proteins. In Pseudomonas putida (strain GB-1), this protein is ATP-dependent Clp protease proteolytic subunit.